The following is a 429-amino-acid chain: Ribosomal RNA small subunit methyltransferase B (429 aa).

Residues 254 to 260 (CAAPGGK), Asp-277, Asp-303, and Asp-322 contribute to the S-adenosyl-L-methionine site. Cys-375 acts as the Nucleophile in catalysis.

This sequence belongs to the class I-like SAM-binding methyltransferase superfamily. RsmB/NOP family.

It is found in the cytoplasm. The enzyme catalyses cytidine(967) in 16S rRNA + S-adenosyl-L-methionine = 5-methylcytidine(967) in 16S rRNA + S-adenosyl-L-homocysteine + H(+). In terms of biological role, specifically methylates the cytosine at position 967 (m5C967) of 16S rRNA. This Photorhabdus laumondii subsp. laumondii (strain DSM 15139 / CIP 105565 / TT01) (Photorhabdus luminescens subsp. laumondii) protein is Ribosomal RNA small subunit methyltransferase B.